The sequence spans 309 residues: DnaJ homolog subfamily B member 7 (309 aa).

One can recognise a J domain in the interval 3–69; that stretch reads DYYEVLGLQR…EKRDIYDKYG (67 aa). The interval 282-309 is disordered; it reads FSAGVKEGGKRKKKKRKEVQKKSTKRNC. The span at 290–309 shows a compositional bias: basic residues; it reads GKRKKKKRKEVQKKSTKRNC.

Probably acts as a co-chaperone. The polypeptide is DnaJ homolog subfamily B member 7 (DNAJB7) (Homo sapiens (Human)).